We begin with the raw amino-acid sequence, 215 residues long: Probable transaldolase (215 aa).

Lys-83 functions as the Schiff-base intermediate with substrate in the catalytic mechanism.

The protein belongs to the transaldolase family. Type 3B subfamily.

The protein localises to the cytoplasm. The enzyme catalyses D-sedoheptulose 7-phosphate + D-glyceraldehyde 3-phosphate = D-erythrose 4-phosphate + beta-D-fructose 6-phosphate. Its pathway is carbohydrate degradation; pentose phosphate pathway; D-glyceraldehyde 3-phosphate and beta-D-fructose 6-phosphate from D-ribose 5-phosphate and D-xylulose 5-phosphate (non-oxidative stage): step 2/3. In terms of biological role, transaldolase is important for the balance of metabolites in the pentose-phosphate pathway. The sequence is that of Probable transaldolase from Desulforudis audaxviator (strain MP104C).